The primary structure comprises 131 residues: Small ribosomal subunit protein uS8c (131 aa).

Belongs to the universal ribosomal protein uS8 family. In terms of assembly, part of the 30S ribosomal subunit.

Its subcellular location is the plastid. It localises to the chloroplast. Functionally, one of the primary rRNA binding proteins, it binds directly to 16S rRNA central domain where it helps coordinate assembly of the platform of the 30S subunit. This is Small ribosomal subunit protein uS8c (rps8) from Tupiella akineta (Green alga).